The primary structure comprises 391 residues: Protein ABCI12, chloroplastic (391 aa).

A chloroplast-targeting transit peptide spans 1 to 63; the sequence is MNHSNLANPT…LAAKRVFIVR (63 aa). A run of 5 helical transmembrane segments spans residues 134-154, 168-188, 229-249, 263-283, and 370-390; these read ANLV…ILVL, LLSG…PPML, VGST…ICLA, FLFP…TLLL, and FASV…EYFL.

Its subcellular location is the plastid. It is found in the chloroplast. The protein localises to the membrane. The chain is Protein ABCI12, chloroplastic (ABCI12) from Arabidopsis thaliana (Mouse-ear cress).